The following is a 354-amino-acid chain: D-alanine--D-alanine ligase (354 aa).

Positions 133–338 (KHLFAQAGLP…YSDLIEQLVE (206 aa)) constitute an ATP-grasp domain. 166-221 (EKELGYPCFVKPANLGSSVGISKCRNREELEKAFELAFEYDRKIVVEEGIAGREIE) is a binding site for ATP. Mg(2+) contacts are provided by Asp-292, Glu-305, and Asn-307.

The protein belongs to the D-alanine--D-alanine ligase family. Mg(2+) is required as a cofactor. The cofactor is Mn(2+).

Its subcellular location is the cytoplasm. It carries out the reaction 2 D-alanine + ATP = D-alanyl-D-alanine + ADP + phosphate + H(+). Its pathway is cell wall biogenesis; peptidoglycan biosynthesis. Functionally, cell wall formation. This Bacillus velezensis (strain DSM 23117 / BGSC 10A6 / LMG 26770 / FZB42) (Bacillus amyloliquefaciens subsp. plantarum) protein is D-alanine--D-alanine ligase.